Consider the following 71-residue polypeptide: SPbeta prophage-derived uncharacterized protein YopF (71 aa).

This chain is SPbeta prophage-derived uncharacterized protein YopF (yopF), found in Bacillus subtilis (strain 168).